The primary structure comprises 848 residues: Protein MEI2-like 2 (848 aa).

RRM domains follow at residues 197–270 (RTLF…FSIP) and 282–355 (GTLV…PSRP). Disordered regions lie at residues 370–400 (IDQD…QYSS), 455–523 (NQPH…SQGQ), and 826–848 (ATGD…GEEL).

Functionally, probable RNA-binding protein that may play a role in growth regulation. The sequence is that of Protein MEI2-like 2 (ML2) from Oryza sativa subsp. japonica (Rice).